A 687-amino-acid chain; its full sequence is Chloride channel protein ClC-Ka (687 aa).

Helical transmembrane passes span 52 to 72 (FLMTLGVLMALVSYAMNFAIG), 161 to 181 (LFLGKVGPFVHLSVMIAAYLG), 202 to 222 (VAAAAVGVATVFAAPFSGVLF), and 236 to 256 (YWRGFFAATCGAFIFRLLAVF). Ca(2+) contacts are provided by E259, E261, D278, and E281. A run of 6 helical transmembrane segments spans residues 282 to 302 (IFFFVALGGICGVLSCAYLFC), 329 to 349 (ALATLLLASITYPPGVGHFLA), 396 to 416 (FTIFGTLAFFLVMKFWMLILA), 417 to 437 (TTIPMPAGYFMPIFILGAAIG), 452 to 472 (IVTGGVTNPIMPGGYALAGAA), and 486 to 506 (LLAFELTGQIVHALPVLMAVL). Residues 507-687 (AANAIAQSCQ…SNLTNPPAPK (181 aa)) are Cytoplasmic-facing. CBS domains follow at residues 551 to 609 (MNHS…EPPS) and 626 to 684 (CPTE…TNPP).

The protein belongs to the chloride channel (TC 2.A.49) family. CLCNKA subfamily. As to quaternary structure, homodimer. Interacts with BSND.

It localises to the basolateral cell membrane. The catalysed reaction is chloride(in) = chloride(out). It carries out the reaction bromide(in) = bromide(out). It catalyses the reaction nitrate(in) = nitrate(out). The enzyme catalyses iodide(out) = iodide(in). Its activity is regulated as follows. Activated by extracellular Ca(2+) and inhibited by extracellular acidic pH. Functionally, anion-selective channel permeable to small monovalent anions with ion selectivity for chloride &gt; bromide &gt; nitrate &gt; iodide. Forms a homodimeric channel where each subunit has its own ion conduction pathway. May conduct double-barreled currents controlled by two types of gates, two fast gates that control each subunit independently and a slow common gate that opens and shuts off both subunits simultaneously. Assembles with the regulatory subunit BSND/Barttin for sorting at the basolateral plasma membrane domain and functional switch to the ion conducting state. CLCNKA:BSND channels display mostly a linear current-voltage relationship with fast gating at negative potentials. Mediates transepithelial chloride transport from the lumen to interstitial compartment along the thin ascending limb of Henle's loop, contributing to generation of hypertonic medullary interstitium as a countercurrent system to achieve urine concentration. Conducts chloride currents in the stria vascularis of the inner ear to establish the endocochlear potential necessary for normal hearing. This chain is Chloride channel protein ClC-Ka, found in Homo sapiens (Human).